Here is a 213-residue protein sequence, read N- to C-terminus: Large ribosomal subunit protein uL3 (213 aa).

It belongs to the universal ribosomal protein uL3 family. Part of the 50S ribosomal subunit. Forms a cluster with proteins L14 and L19.

In terms of biological role, one of the primary rRNA binding proteins, it binds directly near the 3'-end of the 23S rRNA, where it nucleates assembly of the 50S subunit. This chain is Large ribosomal subunit protein uL3, found in Petrotoga mobilis (strain DSM 10674 / SJ95).